The chain runs to 302 residues: Sulfate adenylyltransferase subunit 2 (302 aa).

The tract at residues 280-302 is disordered; the sequence is RQGRLIDSDQSASMEQKKRQGYF.

The protein belongs to the PAPS reductase family. CysD subfamily. As to quaternary structure, heterodimer composed of CysD, the smaller subunit, and CysN.

It catalyses the reaction sulfate + ATP + H(+) = adenosine 5'-phosphosulfate + diphosphate. Its pathway is sulfur metabolism; hydrogen sulfide biosynthesis; sulfite from sulfate: step 1/3. With CysN forms the ATP sulfurylase (ATPS) that catalyzes the adenylation of sulfate producing adenosine 5'-phosphosulfate (APS) and diphosphate, the first enzymatic step in sulfur assimilation pathway. APS synthesis involves the formation of a high-energy phosphoric-sulfuric acid anhydride bond driven by GTP hydrolysis by CysN coupled to ATP hydrolysis by CysD. The sequence is that of Sulfate adenylyltransferase subunit 2 from Shewanella frigidimarina (strain NCIMB 400).